A 414-amino-acid polypeptide reads, in one-letter code: Probable tRNA pseudouridine synthase D (414 aa).

The active-site Nucleophile is D90. Positions 162–382 constitute a TRUD domain; that stretch reads GFPNFFGVQR…SSGDYRIISA (221 aa).

The protein belongs to the pseudouridine synthase TruD family.

It carries out the reaction uridine(13) in tRNA = pseudouridine(13) in tRNA. Its function is as follows. Could be responsible for synthesis of pseudouridine from uracil-13 in transfer RNAs. The sequence is that of Probable tRNA pseudouridine synthase D from Picrophilus torridus (strain ATCC 700027 / DSM 9790 / JCM 10055 / NBRC 100828 / KAW 2/3).